Consider the following 252-residue polypeptide: MMLHAQHMPGQPGTPSLVFLHGFSGDCREWQPVGEQFHGCSRLYIDLPGHGGSAAIPVGGFADVIRLLRATLISYNILKFWLVGYSLGGRVAMMAACQGIPGLCGLVVEGGHPGLQNEQARAERRLSDGRWAERFRHEPLTEVFHDWYQQPVFASLTAQQRQALTALRSQNNGETLAAMLEATSLAAQPDLREALNALAFPFYYLCGERDSKFRALAQEVAATCHVIRNAGHNAHRENPAGVVDSLAQILRL.

Belongs to the AB hydrolase superfamily. MenH family. As to quaternary structure, monomer.

It carries out the reaction 5-enolpyruvoyl-6-hydroxy-2-succinyl-cyclohex-3-ene-1-carboxylate = (1R,6R)-6-hydroxy-2-succinyl-cyclohexa-2,4-diene-1-carboxylate + pyruvate. It participates in quinol/quinone metabolism; 1,4-dihydroxy-2-naphthoate biosynthesis; 1,4-dihydroxy-2-naphthoate from chorismate: step 3/7. The protein operates within quinol/quinone metabolism; menaquinone biosynthesis. Its function is as follows. Catalyzes a proton abstraction reaction that results in 2,5-elimination of pyruvate from 2-succinyl-5-enolpyruvyl-6-hydroxy-3-cyclohexene-1-carboxylate (SEPHCHC) and the formation of 2-succinyl-6-hydroxy-2,4-cyclohexadiene-1-carboxylate (SHCHC). The protein is 2-succinyl-6-hydroxy-2,4-cyclohexadiene-1-carboxylate synthase of Salmonella newport (strain SL254).